Reading from the N-terminus, the 150-residue chain is MIMLKTQRRIAAELLKCGENRIWIDPERIEDVAAAITREDIKRLIHDGVIKKKPIKGQSRARARAFQEARKKGRHRGPGSKKGKKTARMGKKEVWMMTIRALRKELRKLKAEGKLDAHTYRRLYIRAKGGQFKNKRQLYMFMQEHGILKE.

Positions 56–89 (KGQSRARARAFQEARKKGRHRGPGSKKGKKTARM) are disordered. Residues 71–89 (KKGRHRGPGSKKGKKTARM) are compositionally biased toward basic residues.

This sequence belongs to the eukaryotic ribosomal protein eL19 family. Part of the 50S ribosomal subunit.

Binds to the 23S rRNA. The chain is Large ribosomal subunit protein eL19 from Thermococcus kodakarensis (strain ATCC BAA-918 / JCM 12380 / KOD1) (Pyrococcus kodakaraensis (strain KOD1)).